The following is a 481-amino-acid chain: UDP-N-acetylmuramoyl-L-alanyl-D-glutamate--L-lysine ligase (481 aa).

Ser42 provides a ligand contact to UDP-N-acetyl-alpha-D-muramoyl-L-alanyl-D-glutamate. Residue 118–124 (GTKGKTT) participates in ATP binding. Residues Asn158, 160–161 (TT), Ser187, and Arg195 each bind UDP-N-acetyl-alpha-D-muramoyl-L-alanyl-D-glutamate. Lys229 is modified (N6-carboxylysine). Positions 404–407 (DDPN) match the L-lysine recognition motif motif.

It belongs to the MurCDEF family. MurE subfamily. Carboxylation is probably crucial for Mg(2+) binding and, consequently, for the gamma-phosphate positioning of ATP.

Its subcellular location is the cytoplasm. The catalysed reaction is UDP-N-acetyl-alpha-D-muramoyl-L-alanyl-D-glutamate + L-lysine + ATP = UDP-N-acetyl-alpha-D-muramoyl-L-alanyl-gamma-D-glutamyl-L-lysine + ADP + phosphate + H(+). Its pathway is cell wall biogenesis; peptidoglycan biosynthesis. Catalyzes the addition of L-lysine to the nucleotide precursor UDP-N-acetylmuramoyl-L-alanyl-D-glutamate (UMAG) in the biosynthesis of bacterial cell-wall peptidoglycan. The chain is UDP-N-acetylmuramoyl-L-alanyl-D-glutamate--L-lysine ligase from Streptococcus thermophilus (strain ATCC BAA-491 / LMD-9).